Here is a 600-residue protein sequence, read N- to C-terminus: Aspartate--tRNA(Asp/Asn) ligase (600 aa).

L-aspartate is bound at residue Glu176. The tract at residues 200 to 203 (QQFK) is aspartate. L-aspartate-binding residues include Arg222 and His452. 222 to 224 (RDE) serves as a coordination point for ATP. Glu490 is an ATP binding site. Residue Arg497 coordinates L-aspartate. 542-545 (GIDR) contacts ATP.

This sequence belongs to the class-II aminoacyl-tRNA synthetase family. Type 1 subfamily. As to quaternary structure, homodimer.

The protein resides in the cytoplasm. The catalysed reaction is tRNA(Asx) + L-aspartate + ATP = L-aspartyl-tRNA(Asx) + AMP + diphosphate. Functionally, aspartyl-tRNA synthetase with relaxed tRNA specificity since it is able to aspartylate not only its cognate tRNA(Asp) but also tRNA(Asn). Reaction proceeds in two steps: L-aspartate is first activated by ATP to form Asp-AMP and then transferred to the acceptor end of tRNA(Asp/Asn). This chain is Aspartate--tRNA(Asp/Asn) ligase, found in Rickettsia felis (strain ATCC VR-1525 / URRWXCal2) (Rickettsia azadi).